A 343-amino-acid polypeptide reads, in one-letter code: Protein RecA (343 aa).

Residue 68–75 (GPESGGKT) participates in ATP binding.

This sequence belongs to the RecA family.

The protein resides in the cytoplasm. Functionally, can catalyze the hydrolysis of ATP in the presence of single-stranded DNA, the ATP-dependent uptake of single-stranded DNA by duplex DNA, and the ATP-dependent hybridization of homologous single-stranded DNAs. It interacts with LexA causing its activation and leading to its autocatalytic cleavage. The sequence is that of Protein RecA from Syntrophus aciditrophicus (strain SB).